We begin with the raw amino-acid sequence, 438 residues long: 3-phosphoshikimate 1-carboxyvinyltransferase (438 aa).

The 3-phosphoshikimate site is built by K26, S27, and R31. Position 26 (K26) interacts with phosphoenolpyruvate. Phosphoenolpyruvate-binding residues include G99 and R127. Positions 172, 174, 320, and 347 each coordinate 3-phosphoshikimate. Q174 contributes to the phosphoenolpyruvate binding site. D320 acts as the Proton acceptor in catalysis. Phosphoenolpyruvate contacts are provided by R351 and R392.

It belongs to the EPSP synthase family. Monomer.

Its subcellular location is the cytoplasm. It catalyses the reaction 3-phosphoshikimate + phosphoenolpyruvate = 5-O-(1-carboxyvinyl)-3-phosphoshikimate + phosphate. The protein operates within metabolic intermediate biosynthesis; chorismate biosynthesis; chorismate from D-erythrose 4-phosphate and phosphoenolpyruvate: step 6/7. Catalyzes the transfer of the enolpyruvyl moiety of phosphoenolpyruvate (PEP) to the 5-hydroxyl of shikimate-3-phosphate (S3P) to produce enolpyruvyl shikimate-3-phosphate and inorganic phosphate. The polypeptide is 3-phosphoshikimate 1-carboxyvinyltransferase (Xanthomonas campestris pv. campestris (strain B100)).